The chain runs to 427 residues: Gamma-glutamyl phosphate reductase (427 aa).

This sequence belongs to the gamma-glutamyl phosphate reductase family.

Its subcellular location is the cytoplasm. It catalyses the reaction L-glutamate 5-semialdehyde + phosphate + NADP(+) = L-glutamyl 5-phosphate + NADPH + H(+). The protein operates within amino-acid biosynthesis; L-proline biosynthesis; L-glutamate 5-semialdehyde from L-glutamate: step 2/2. In terms of biological role, catalyzes the NADPH-dependent reduction of L-glutamate 5-phosphate into L-glutamate 5-semialdehyde and phosphate. The product spontaneously undergoes cyclization to form 1-pyrroline-5-carboxylate. This is Gamma-glutamyl phosphate reductase from Rhizobium rhizogenes (strain K84 / ATCC BAA-868) (Agrobacterium radiobacter).